We begin with the raw amino-acid sequence, 95 residues long: Large ribosomal subunit protein bL25 (95 aa).

The protein belongs to the bacterial ribosomal protein bL25 family. Part of the 50S ribosomal subunit; part of the 5S rRNA/L5/L18/L25 subcomplex. Contacts the 5S rRNA. Binds to the 5S rRNA independently of L5 and L18.

Its function is as follows. This is one of the proteins that binds to the 5S RNA in the ribosome where it forms part of the central protuberance. This is Large ribosomal subunit protein bL25 from Chromobacterium violaceum (strain ATCC 12472 / DSM 30191 / JCM 1249 / CCUG 213 / NBRC 12614 / NCIMB 9131 / NCTC 9757 / MK).